Here is a 492-residue protein sequence, read N- to C-terminus: MAFPPNSWRPTGPLPTSSLSLRWRVMMLAMSMVALVVVLMAVAVYAVVSRALYDDLDNQLHSRARLLIESGSLAADPGKAIEGTAYSDVNAMLVIPGRSIYTANQQGQTLPLGEPEKDVISGELLMSLRTANHQRVLAVHLANGSSLLISKSLAPTVQVLRRLGTVLLIVGGIGVAVAAIAGGAVARAGLRPVGRLTEAAERVARTDDLRPIPVVGSDELARLTEAFNMMLRALAESRERQARLVSDAGHELRTPLTSLRTNVELLMAAQEPGAPPLPEDEMAGLRADVIAQIEELSTLVGDLVDLTREDAGGITPEPVDMADVIDRSLERVRRRRNDIEFDVDVIGWQVFGDAQGLGRAVLNLLDNAAKWSPPGGRVGVRLHQVDHMHAEIVVSDQGPGIPPEERRLVFERFYRSDAARAMPGSGLGLAIVQQVVLKHGGALRIDETVPGGNPPGASVHMLLPGQRIPDPGATRSAEGFVDDRGGHTVATE.

Residues 1–27 (MAFPPNSWRPTGPLPTSSLSLRWRVMM) are Cytoplasmic-facing. The chain crosses the membrane as a helical span at residues 28–48 (LAMSMVALVVVLMAVAVYAVV). The Extracellular segment spans residues 49–165 (SRALYDDLDN…TVQVLRRLGT (117 aa)). A helical membrane pass occupies residues 166–186 (VLLIVGGIGVAVAAIAGGAVA). In terms of domain architecture, HAMP spans 187-239 (RAGLRPVGRLTEAAERVARTDDLRPIPVVGSDELARLTEAFNMMLRALAESRE). Over 187–492 (RAGLRPVGRL…DRGGHTVATE (306 aa)) the chain is Cytoplasmic. The region spanning 247–467 (DAGHELRTPL…SVHMLLPGQR (221 aa)) is the Histidine kinase domain. H250 is subject to Phosphohistidine; by autocatalysis. The segment at 470–492 (DPGATRSAEGFVDDRGGHTVATE) is disordered.

Requires Mg(2+) as cofactor. Mn(2+) serves as cofactor. In terms of processing, autophosphorylated.

The protein resides in the cell membrane. The enzyme catalyses ATP + protein L-histidine = ADP + protein N-phospho-L-histidine.. Its function is as follows. Member of the two-component regulatory system MprB/MprA which contributes to maintaining a balance among several systems involved in stress resistance and is required for establishment and maintenance of persistent infection in the host. In response to environmental signals MprB acts both as a membrane-associated protein kinase that undergoes autophosphorylation and subsequently transfers the phosphate to MprA, and a protein phosphatase that dephosphorylates phospho-MprA. The polypeptide is Signal transduction histidine-protein kinase/phosphatase MprB (mprB) (Mycolicibacterium smegmatis (strain ATCC 700084 / mc(2)155) (Mycobacterium smegmatis)).